Consider the following 337-residue polypeptide: Large ribosomal subunit protein uL3 (337 aa).

The segment at Met1–Lys26 is disordered.

Belongs to the universal ribosomal protein uL3 family. In terms of assembly, part of the 50S ribosomal subunit. Forms a cluster with proteins L14 and L24e.

In terms of biological role, one of the primary rRNA binding proteins, it binds directly near the 3'-end of the 23S rRNA, where it nucleates assembly of the 50S subunit. The protein is Large ribosomal subunit protein uL3 of Methanocella arvoryzae (strain DSM 22066 / NBRC 105507 / MRE50).